The sequence spans 265 residues: Mlc titration factor A (265 aa).

The Zn(2+) site is built by His111, His148, His152, and Glu211.

Belongs to the MtfA family. As to quaternary structure, interacts with Mlc. Zn(2+) serves as cofactor.

The protein localises to the cytoplasm. Its function is as follows. Involved in the modulation of the activity of the glucose-phosphotransferase system (glucose-PTS). Interacts with the transcriptional repressor Mlc, preventing its interaction with DNA and leading to the modulation of expression of genes regulated by Mlc, including ptsG, which encodes the PTS system glucose-specific EIICB component. Shows zinc-dependent metallopeptidase activity. The protein is Mlc titration factor A of Pectobacterium atrosepticum (strain SCRI 1043 / ATCC BAA-672) (Erwinia carotovora subsp. atroseptica).